Reading from the N-terminus, the 97-residue chain is MSMFGLFTCLSIYFSGVYVFCSKRKHLLVVLLSLEYIVLSLFMLIVLFLVEFDYDYFFPVIFLVFSVCEGALGLSILVSMIRSHGNDFFNSFFLSLC.

3 consecutive transmembrane segments (helical) span residues 1-21 (MSMFGLFTCLSIYFSGVYVFC), 28-48 (LVVLLSLEYIVLSLFMLIVLF), and 57-77 (FFPVIFLVFSVCEGALGLSIL).

The protein belongs to the complex I subunit 4L family.

It localises to the mitochondrion membrane. It carries out the reaction a ubiquinone + NADH + 5 H(+)(in) = a ubiquinol + NAD(+) + 4 H(+)(out). Its function is as follows. Core subunit of the mitochondrial membrane respiratory chain NADH dehydrogenase (Complex I) that is believed to belong to the minimal assembly required for catalysis. Complex I functions in the transfer of electrons from NADH to the respiratory chain. The immediate electron acceptor for the enzyme is believed to be ubiquinone. The sequence is that of NADH-ubiquinone oxidoreductase chain 4L (ND4L) from Locusta migratoria (Migratory locust).